The sequence spans 472 residues: Uronate isomerase (472 aa).

This sequence belongs to the metallo-dependent hydrolases superfamily. Uronate isomerase family.

It catalyses the reaction D-glucuronate = D-fructuronate. It carries out the reaction aldehydo-D-galacturonate = keto-D-tagaturonate. Its pathway is carbohydrate metabolism; pentose and glucuronate interconversion. The polypeptide is Uronate isomerase (Opitutus terrae (strain DSM 11246 / JCM 15787 / PB90-1)).